Here is an 87-residue protein sequence, read N- to C-terminus: Small ribosomal subunit protein bS16 (87 aa).

This sequence belongs to the bacterial ribosomal protein bS16 family.

This Aster yellows witches'-broom phytoplasma (strain AYWB) protein is Small ribosomal subunit protein bS16.